A 637-amino-acid polypeptide reads, in one-letter code: tRNA uridine 5-carboxymethylaminomethyl modification enzyme MnmG (637 aa).

FAD-binding positions include 15–20 (GAGHAG), Ile127, and Ser182. Residue 276-290 (GPRYCPSIEDKIVRF) coordinates NAD(+). Gln373 contacts FAD.

It belongs to the MnmG family. Homodimer. Heterotetramer of two MnmE and two MnmG subunits. FAD serves as cofactor.

It localises to the cytoplasm. NAD-binding protein involved in the addition of a carboxymethylaminomethyl (cmnm) group at the wobble position (U34) of certain tRNAs, forming tRNA-cmnm(5)s(2)U34. This Streptococcus pneumoniae serotype 4 (strain ATCC BAA-334 / TIGR4) protein is tRNA uridine 5-carboxymethylaminomethyl modification enzyme MnmG.